A 204-amino-acid chain; its full sequence is Pyridoxal 5'-phosphate synthase subunit PdxT (204 aa).

52–54 (GES) lines the L-glutamine pocket. The active-site Nucleophile is C84. L-glutamine is bound by residues R116 and 143–144 (IR). Active-site charge relay system residues include H184 and E186.

This sequence belongs to the glutaminase PdxT/SNO family. As to quaternary structure, in the presence of PdxS, forms a dodecamer of heterodimers. Only shows activity in the heterodimer.

The catalysed reaction is aldehydo-D-ribose 5-phosphate + D-glyceraldehyde 3-phosphate + L-glutamine = pyridoxal 5'-phosphate + L-glutamate + phosphate + 3 H2O + H(+). It carries out the reaction L-glutamine + H2O = L-glutamate + NH4(+). Its pathway is cofactor biosynthesis; pyridoxal 5'-phosphate biosynthesis. Its function is as follows. Catalyzes the hydrolysis of glutamine to glutamate and ammonia as part of the biosynthesis of pyridoxal 5'-phosphate. The resulting ammonia molecule is channeled to the active site of PdxS. The sequence is that of Pyridoxal 5'-phosphate synthase subunit PdxT from Pyrobaculum aerophilum (strain ATCC 51768 / DSM 7523 / JCM 9630 / CIP 104966 / NBRC 100827 / IM2).